The primary structure comprises 317 residues: Transaldolase (317 aa).

The active-site Schiff-base intermediate with substrate is Lys132.

The protein belongs to the transaldolase family. Type 1 subfamily. As to quaternary structure, homodimer.

The protein localises to the cytoplasm. It carries out the reaction D-sedoheptulose 7-phosphate + D-glyceraldehyde 3-phosphate = D-erythrose 4-phosphate + beta-D-fructose 6-phosphate. The protein operates within carbohydrate degradation; pentose phosphate pathway; D-glyceraldehyde 3-phosphate and beta-D-fructose 6-phosphate from D-ribose 5-phosphate and D-xylulose 5-phosphate (non-oxidative stage): step 2/3. Functionally, transaldolase is important for the balance of metabolites in the pentose-phosphate pathway. The sequence is that of Transaldolase from Yersinia enterocolitica serotype O:8 / biotype 1B (strain NCTC 13174 / 8081).